The primary structure comprises 179 residues: Cell division protein SepF (179 aa).

Positions 18–57 (EDSTVPYEKGNEPVFTPVNSSQEPDLPMNQPSQSAGAKDS) are disordered. Over residues 34–57 (PVNSSQEPDLPMNQPSQSAGAKDS) the composition is skewed to polar residues.

It belongs to the SepF family. In terms of assembly, homodimer. Interacts with FtsZ.

The protein localises to the cytoplasm. Cell division protein that is part of the divisome complex and is recruited early to the Z-ring. Probably stimulates Z-ring formation, perhaps through the cross-linking of FtsZ protofilaments. Its function overlaps with FtsA. This is Cell division protein SepF from Streptococcus pneumoniae (strain Hungary19A-6).